A 122-amino-acid polypeptide reads, in one-letter code: NADH-quinone oxidoreductase subunit A (122 aa).

3 helical membrane passes run 12-32, 66-86, and 91-111; these read IIIF…VNLI, LVAI…PWAI, and IGGL…VGFI.

This sequence belongs to the complex I subunit 3 family. NDH-1 is composed of 14 different subunits. Subunits NuoA, H, J, K, L, M, N constitute the membrane sector of the complex.

It localises to the cell inner membrane. It catalyses the reaction a quinone + NADH + 5 H(+)(in) = a quinol + NAD(+) + 4 H(+)(out). In terms of biological role, NDH-1 shuttles electrons from NADH, via FMN and iron-sulfur (Fe-S) centers, to quinones in the respiratory chain. The immediate electron acceptor for the enzyme in this species is believed to be ubiquinone. Couples the redox reaction to proton translocation (for every two electrons transferred, four hydrogen ions are translocated across the cytoplasmic membrane), and thus conserves the redox energy in a proton gradient. The polypeptide is NADH-quinone oxidoreductase subunit A (Pelagibacter ubique (strain HTCC1062)).